The sequence spans 159 residues: Sulfur carrier protein DsrE2 (159 aa).

2 helical membrane passes run Pro21–Gly43 and Trp72–Met91.

It localises to the cell membrane. The protein operates within energy metabolism; sulfur metabolism. Functionally, sulfur carrier protein probably involved in sulfur trafficking for oxidative dissimilatory sulfur metabolism. May be a component of a cytoplasmic sulfur relay system delivering sulfur to DsrC. Binds sulfur in the presence of sulfide in vitro. The sequence is that of Sulfur carrier protein DsrE2 from Allochromatium vinosum (strain ATCC 17899 / DSM 180 / NBRC 103801 / NCIMB 10441 / D) (Chromatium vinosum).